The sequence spans 120 residues: Basic phospholipase A2 Cc2-PLA2 (120 aa).

7 disulfide bridges follow: Cys26/Cys113, Cys28/Cys44, Cys43/Cys95, Cys49/Cys120, Cys50/Cys88, Cys57/Cys81, and Cys75/Cys86. Residues Tyr27, Gly29, and Gly31 each contribute to the Ca(2+) site. His47 is an active-site residue. A Ca(2+)-binding site is contributed by Asp48. The active site involves Asp89.

Belongs to the phospholipase A2 family. Group II subfamily. D49 sub-subfamily. As to quaternary structure, monomer. Requires Ca(2+) as cofactor. As to expression, expressed by the venom gland.

It is found in the secreted. The catalysed reaction is a 1,2-diacyl-sn-glycero-3-phosphocholine + H2O = a 1-acyl-sn-glycero-3-phosphocholine + a fatty acid + H(+). Basic phospholipase A2 that inhibits ADP-, thrombin- and arachidonic acid-induced platelet aggregation. It also exhibits anticoagulant effects upon human plasma in vitro. It induces a high hemolytic activity reaching its maximum after 24 hours. It induces a marked elevation of plasmatic levels of interleukin-6 and -10, eosinophil peroxidase and complement lytic activities and it also provokes a drastic increase of lymphocytes, monocytes and neutrophils in peripheral blood accompanied by a rapid intense migration of neutrophils to the peritoneal cavity. PLA2 catalyzes the calcium-dependent hydrolysis of the 2-acyl groups in 3-sn-phosphoglycerides. The polypeptide is Basic phospholipase A2 Cc2-PLA2 (Cerastes cerastes (Horned desert viper)).